The primary structure comprises 510 residues: MSAKKPMALVILDGYGHRETQADNAITNANTPVLDGLMANQPNTLISASGMDVGLPDGQMGNSEVGHTNIGAGRVVYQDLTRITKAISDGEFQQNETLVNAIDKAVKAGKAVHIMGLMSPGGVHSHEDHIYAAVEMAAARGAEKIYLHCFLDGRDTPPRSAENSLKNFQELFAKLGKGRIASLVGRYYAMDRDNNWERVQKAYDLMTEAKAEFTFATAVEGLEAAYAREENDEFVQATEIKAEGEESAAIVDGDAVIFMNYRADRARQITRTFVPSFDGFTRNVFPAIDFVMLTQYAADIPLLCAFAPASLENTYGEWLSKEGKTQLRISETEKYAHVTFFFNGGIEDEFEGEERQLVASPKVATYDLQPEMSAPELTEKLVAAIKSGKYDAIVCNFPNCDMVGHTGVYDAAVKAVESLDECIGKVVEAIKEVDGQLLITADHGNAEMMIDPETGGVHTAHTNLPVPLIYVGSKAVEFKEGGKLSDLAPTMLALTDTAIPAEMSGEVLFK.

Asp-13 and Ser-63 together coordinate Mn(2+). Ser-63 acts as the Phosphoserine intermediate in catalysis. Residues His-124, 154-155, Arg-186, Arg-192, 262-265, and Lys-334 each bind substrate; these read RD and RADR. Asp-401, His-405, Asp-442, His-443, and His-461 together coordinate Mn(2+).

Belongs to the BPG-independent phosphoglycerate mutase family. Monomer. Mn(2+) serves as cofactor.

It carries out the reaction (2R)-2-phosphoglycerate = (2R)-3-phosphoglycerate. It functions in the pathway carbohydrate degradation; glycolysis; pyruvate from D-glyceraldehyde 3-phosphate: step 3/5. Catalyzes the interconversion of 2-phosphoglycerate and 3-phosphoglycerate. This chain is 2,3-bisphosphoglycerate-independent phosphoglycerate mutase, found in Aliivibrio fischeri (strain ATCC 700601 / ES114) (Vibrio fischeri).